The following is a 70-amino-acid chain: DNA-directed RNA polymerase subunit omega (70 aa).

Belongs to the RNA polymerase subunit omega family. As to quaternary structure, the RNAP catalytic core consists of 2 alpha, 1 beta, 1 beta' and 1 omega subunit. When a sigma factor is associated with the core the holoenzyme is formed, which can initiate transcription.

It catalyses the reaction RNA(n) + a ribonucleoside 5'-triphosphate = RNA(n+1) + diphosphate. Functionally, promotes RNA polymerase assembly. Latches the N- and C-terminal regions of the beta' subunit thereby facilitating its interaction with the beta and alpha subunits. This Caldanaerobacter subterraneus subsp. tengcongensis (strain DSM 15242 / JCM 11007 / NBRC 100824 / MB4) (Thermoanaerobacter tengcongensis) protein is DNA-directed RNA polymerase subunit omega.